Consider the following 261-residue polypeptide: tRNA U34 carboxymethyltransferase (261 aa).

Carboxy-S-adenosyl-L-methionine is bound by residues lysine 25, tryptophan 39, lysine 44, glycine 63, 114-115 (VE), tyrosine 135, and arginine 250.

Belongs to the class I-like SAM-binding methyltransferase superfamily. CmoB family. In terms of assembly, homotetramer.

It catalyses the reaction carboxy-S-adenosyl-L-methionine + 5-hydroxyuridine(34) in tRNA = 5-carboxymethoxyuridine(34) in tRNA + S-adenosyl-L-homocysteine + H(+). In terms of biological role, catalyzes carboxymethyl transfer from carboxy-S-adenosyl-L-methionine (Cx-SAM) to 5-hydroxyuridine (ho5U) to form 5-carboxymethoxyuridine (cmo5U) at position 34 in tRNAs. This chain is tRNA U34 carboxymethyltransferase, found in Helicobacter pylori (strain Shi470).